Here is a 336-residue protein sequence, read N- to C-terminus: uncharacterized protein (336 aa).

The interval 196 to 222 (YKEGDDSNWDDFGSESEDDSKEAHSEE) is disordered. Residues 201–215 (DSNWDDFGSESEDDS) show a composition bias toward acidic residues. Ser211 carries the phosphoserine modification.

This is an uncharacterized protein from Schizosaccharomyces pombe (strain 972 / ATCC 24843) (Fission yeast).